The sequence spans 126 residues: Glycine cleavage system H protein (126 aa).

The 83-residue stretch at 22–104 (TVTIGITEYA…YEKAWMVKVE (83 aa)) folds into the Lipoyl-binding domain. Residue K63 is modified to N6-lipoyllysine.

This sequence belongs to the GcvH family. The glycine cleavage system is composed of four proteins: P, T, L and H. Requires (R)-lipoate as cofactor.

In terms of biological role, the glycine cleavage system catalyzes the degradation of glycine. The H protein shuttles the methylamine group of glycine from the P protein to the T protein. Its function is as follows. Is also involved in protein lipoylation via its role as an octanoyl/lipoyl carrier protein intermediate. The protein is Glycine cleavage system H protein of Staphylococcus haemolyticus (strain JCSC1435).